Reading from the N-terminus, the 617-residue chain is MALVGSRVELDADEDIFEDALETISRSPSDMATSGFHFVPCETKRTSRQLGASAMGRPEGSSAKVDLKSGLEECAEALNLFLSNKFKDALELLRPWAKESMYHALGYSTIVVLQAVMTFEQQDIQNGISAMKDALQTCQKYRKKCTVVESFSSLLSRGSLEQLSEEEMHAEICYAECLLQKAALTFVQDENMINFIKGGLKIRTSYQIYKECLSILHVIQKNKQEQHFFYEFEGGVKLGTGAFNLMLSLLPARIIRLLEFIGFSGNRDLGLLQLREGASGSSMRSPLCCLTILAFHTYISLILGTGEVNVVEAESLLAPFLQQFPNGSLILFYHARIELLKGNTEKAQETFRKCISVQEEWKQFHHLCYWELMWIHIYQQNWMQAYYYSDLLCKESKWSKATYVFLKAAILSMLPEEEVAATKENVVSLFRQVDGLKQRIAGKSLPTEKFAVRKARRYSPPSGVPGKLVMPALEMMYVWNGFSIVGKRKDLSENLLVTVEKAEEALQNQDFTDYSVDDECLVKLLKGCCLKNLERPLQAELCFNHVVESEKLLKYDHYLVPFTLFELAFLYKSQGEIDKAIKVLETARNNYKDYSLESRLHFRIQAALHLWKKPSTD.

3 TPR repeats span residues 328 to 361 (SLILFYHARIELLKGNTEKAQETFRKCISVQEEW), 520 to 553 (CLVKLLKGCCLKNLERPLQAELCFNHVVESEKLL), and 561 to 594 (PFTLFELAFLYKSQGEIDKAIKVLETARNNYKDY).

This sequence belongs to the TTC39 family. As to expression, high expression in lung and spleen. Low lower expression in liver and small intestine. Weak expression in heart, brain, kidney, adipose, and adrenal gland.

Regulates high density lipoprotein (HDL) cholesterol metabolism by promoting the ubiquitination and degradation of the oxysterols receptors LXR (NR1H2 and NR1H3). In Mus musculus (Mouse), this protein is Tetratricopeptide repeat protein 39B.